The primary structure comprises 314 residues: Periplasmic [NiFe] hydrogenase small subunit (314 aa).

The tat-type signal signal peptide spans Met1–Glu49. Residues Cys67, Cys70, Cys164, Cys197, His234, Cys237, Cys262, and Cys268 each contribute to the [4Fe-4S] cluster site. Residues Cys277, Cys295, and Cys298 each contribute to the [3Fe-4S] cluster site.

Belongs to the [NiFe]/[NiFeSe] hydrogenase small subunit family. As to quaternary structure, heterodimer of a large and a small subunit. The cofactor is [4Fe-4S] cluster. It depends on [3Fe-4S] cluster as a cofactor. Predicted to be exported by the Tat system. The position of the signal peptide cleavage has been experimentally proven.

It is found in the periplasm. The catalysed reaction is 2 Fe(III)-[cytochrome c3] + H2 = 2 Fe(II)-[cytochrome c3] + 2 H(+). In terms of biological role, involved in hydrogen uptake for the anaerobic reduction of sulfate to hydrogen sulfide in an electron transport chain. Cytochrome c3 is the physiological electron acceptor. This is Periplasmic [NiFe] hydrogenase small subunit (hydA) from Solidesulfovibrio fructosivorans (Desulfovibrio fructosivorans).